The sequence spans 549 residues: Probable protein kinase UbiB (549 aa).

The 379-residue stretch at 123 to 501 (DFNEIPLASA…QQQAHKSNYL (379 aa)) folds into the Protein kinase domain. ATP is bound by residues 129–137 (LASASISQV) and K152. Catalysis depends on D287, which acts as the Proton acceptor. 2 helical membrane passes run 496 to 516 (HKSN…TLLI) and 520 to 540 (ATLW…FVGW).

Belongs to the ABC1 family. UbiB subfamily.

It localises to the cell inner membrane. It functions in the pathway cofactor biosynthesis; ubiquinone biosynthesis [regulation]. Its function is as follows. Is probably a protein kinase regulator of UbiI activity which is involved in aerobic coenzyme Q (ubiquinone) biosynthesis. In Shewanella baltica (strain OS223), this protein is Probable protein kinase UbiB.